The chain runs to 294 residues: 4-hydroxy-tetrahydrodipicolinate synthase (294 aa).

T45 is a pyruvate binding site. Y133 functions as the Proton donor/acceptor in the catalytic mechanism. The Schiff-base intermediate with substrate role is filled by K161. Position 203 (I203) interacts with pyruvate.

The protein belongs to the DapA family. As to quaternary structure, homotetramer; dimer of dimers.

It is found in the cytoplasm. The enzyme catalyses L-aspartate 4-semialdehyde + pyruvate = (2S,4S)-4-hydroxy-2,3,4,5-tetrahydrodipicolinate + H2O + H(+). It participates in amino-acid biosynthesis; L-lysine biosynthesis via DAP pathway; (S)-tetrahydrodipicolinate from L-aspartate: step 3/4. In terms of biological role, catalyzes the condensation of (S)-aspartate-beta-semialdehyde [(S)-ASA] and pyruvate to 4-hydroxy-tetrahydrodipicolinate (HTPA). The chain is 4-hydroxy-tetrahydrodipicolinate synthase from Buchnera aphidicola subsp. Baizongia pistaciae (strain Bp).